A 103-amino-acid chain; its full sequence is Ghrelin (103 aa).

An N-terminal signal peptide occupies residues 1–26 (MPLRRRASHMFVLLCALSLCVESVKG). The interval 27-51 (GTSFLSPAQKPQGRRPPRMGRRDVA) is disordered. A lipid anchor (O-decanoyl serine; alternate) is attached at S29. The O-hexanoyl serine; alternate moiety is linked to residue S29. S29 carries O-octanoyl serine; alternate lipidation. Q38 is subject to Glutamine amide. A Methionine amide modification is found at M45. Positions 49 to 103 (DVAEPEIPVIKEDDQFMMSAPFELSVSLSEAEYEKYGPVLQKVLVNLLGDSPLEF) are cleaved as a propeptide — removed in mature form.

Belongs to the motilin family. In terms of processing, O-octanoylated by GOAT/MBOAT4. O-octanoylation or O-decanoylation is essential for activity. The O-decanoylated form differs in the length of the carbon backbone of the carboxylic acid forming an ester bond with Ser-29. Expressed in the telencephalon, hypothalamus, pituitary, intestine, liver, spleen and gill, with expression strongest in the intestine.

Its subcellular location is the secreted. Its function is as follows. Ligand for growth hormone secretagogue receptor type 1 (GHSR). Induces the release of growth hormone from the pituitary. Induces adiposity and stimulates gastric acid secretion. Involved in growth regulation. Has an appetite-stimulating effect. The polypeptide is Ghrelin (ghrl) (Carassius auratus (Goldfish)).